The following is a 446-amino-acid chain: Tubulin beta-2 chain (446 aa).

Residues Gln11, Glu69, Ser138, Gly142, Thr143, Gly144, Asn204, and Asn226 each contribute to the GTP site. Glu69 contacts Mg(2+). The interval 424 to 446 (QYQEATADEEGEFDEDEEGGGDE) is disordered. Residues 429–446 (TADEEGEFDEDEEGGGDE) show a composition bias toward acidic residues.

The protein belongs to the tubulin family. In terms of assembly, dimer of alpha and beta chains. A typical microtubule is a hollow water-filled tube with an outer diameter of 25 nm and an inner diameter of 15 nM. Alpha-beta heterodimers associate head-to-tail to form protofilaments running lengthwise along the microtubule wall with the beta-tubulin subunit facing the microtubule plus end conferring a structural polarity. Microtubules usually have 13 protofilaments but different protofilament numbers can be found in some organisms and specialized cells. The cofactor is Mg(2+).

It localises to the cytoplasm. Its subcellular location is the cytoskeleton. Its function is as follows. Tubulin is the major constituent of microtubules, a cylinder consisting of laterally associated linear protofilaments composed of alpha- and beta-tubulin heterodimers. Microtubules grow by the addition of GTP-tubulin dimers to the microtubule end, where a stabilizing cap forms. Below the cap, tubulin dimers are in GDP-bound state, owing to GTPase activity of alpha-tubulin. This Drosophila erecta (Fruit fly) protein is Tubulin beta-2 chain (betaTub85D).